Consider the following 239-residue polypeptide: mRNA turnover protein 4 homolog (239 aa).

The disordered stretch occupies residues 215–239 (FQQMGDDLPESASESTEESDSEDDD). 3 positions are modified to phosphoserine: Ser-225, Ser-229, and Ser-233. A compositionally biased stretch (acidic residues) spans 229-239 (STEESDSEDDD).

It belongs to the universal ribosomal protein uL10 family. As to quaternary structure, associates with the pre-60S ribosomal particle. Interacts with MINAS-60 (product of an alternative open reading frame of RBM10).

It is found in the nucleus. The protein localises to the nucleolus. It localises to the cytoplasm. Functionally, component of the ribosome assembly machinery. Nuclear paralog of the ribosomal protein P0, it binds pre-60S subunits at an early stage of assembly in the nucleolus, and is replaced by P0 in cytoplasmic pre-60S subunits and mature 80S ribosomes. This Homo sapiens (Human) protein is mRNA turnover protein 4 homolog (MRTO4).